Reading from the N-terminus, the 453-residue chain is Allantoinase (453 aa).

The Zn(2+) site is built by His59, His61, Lys146, His186, His242, and Asp315. Lys146 bears the N6-carboxylysine mark.

The protein belongs to the metallo-dependent hydrolases superfamily. Allantoinase family. As to quaternary structure, homotetramer. Requires Zn(2+) as cofactor. In terms of processing, carboxylation allows a single lysine to coordinate two zinc ions.

The catalysed reaction is (S)-allantoin + H2O = allantoate + H(+). It functions in the pathway nitrogen metabolism; (S)-allantoin degradation; allantoate from (S)-allantoin: step 1/1. Functionally, catalyzes the conversion of allantoin (5-ureidohydantoin) to allantoic acid by hydrolytic cleavage of the five-member hydantoin ring. The polypeptide is Allantoinase (Salmonella gallinarum (strain 287/91 / NCTC 13346)).